The chain runs to 325 residues: MSWFTPELIEILISVLKAVVILLVVVTCGAFMSFGERRLLGLFQNRYGPNRVGWGGSLQLVADMIKMFFKEDWVPRFSDRAIFTLAPVIAFTSLLLSFAIVPVSPTWAVADLNIGILFFLMMAGLAVYAVLFAGWASNNKYSLLGAMRASAQTLSYEVFLGLSLMGVVAQVGSFNMQDIVNSQEHVWNVIPQFFGFLTFAIAGVAVCHRHPFDQPEAEQELADGYHIEYSGMKFGLFFVGEYIGIVTVSALIVTLFFGGWQGPFLPPFIWFALKTAFFMVMFILIRASLPRPRYDQVMSFGWKVCLPLTLLNLLATAAVILYNAQ.

A run of 8 helical transmembrane segments spans residues 11–31, 81–101, 114–134, 154–174, 186–206, 237–257, 265–285, and 304–324; these read ILISVLKAVVILLVVVTCGAF, AIFTLAPVIAFTSLLLSFAIV, IGILFFLMMAGLAVYAVLFAG, LSYEVFLGLSLMGVVAQVGSF, VWNVIPQFFGFLTFAIAGVAV, FFVGEYIGIVTVSALIVTLFF, LPPFIWFALKTAFFMVMFILI, and VCLPLTLLNLLATAAVILYNA.

The protein belongs to the complex I subunit 1 family. NDH-1 is composed of 13 different subunits. Subunits NuoA, H, J, K, L, M, N constitute the membrane sector of the complex.

Its subcellular location is the cell inner membrane. The enzyme catalyses a quinone + NADH + 5 H(+)(in) = a quinol + NAD(+) + 4 H(+)(out). Its function is as follows. NDH-1 shuttles electrons from NADH, via FMN and iron-sulfur (Fe-S) centers, to quinones in the respiratory chain. The immediate electron acceptor for the enzyme in this species is believed to be ubiquinone. Couples the redox reaction to proton translocation (for every two electrons transferred, four hydrogen ions are translocated across the cytoplasmic membrane), and thus conserves the redox energy in a proton gradient. This subunit may bind ubiquinone. The sequence is that of NADH-quinone oxidoreductase subunit H from Yersinia pseudotuberculosis serotype O:3 (strain YPIII).